The sequence spans 542 residues: Adenine deaminase (542 aa).

It belongs to the metallo-dependent hydrolases superfamily. Adenine deaminase family. It depends on Mn(2+) as a cofactor.

It catalyses the reaction adenine + H2O + H(+) = hypoxanthine + NH4(+). This is Adenine deaminase from Methanosphaera stadtmanae (strain ATCC 43021 / DSM 3091 / JCM 11832 / MCB-3).